Reading from the N-terminus, the 528-residue chain is UDP-glucuronosyltransferase 2B10 (528 aa).

Positions 1-23 (MALKWTTVLLIQLSFYFSSGSCG) are cleaved as a signal peptide. Residue Asn66 is glycosylated (N-linked (GlcNAc...) asparagine). Lys134 is subject to N6-succinyllysine. N-linked (GlcNAc...) asparagine glycosylation is found at Asn314 and Asn481. The helical transmembrane segment at 492-512 (VIGFLLACVATVLFIITKCCL) threads the bilayer.

Belongs to the UDP-glycosyltransferase family.

Its subcellular location is the microsome membrane. It localises to the endoplasmic reticulum membrane. It carries out the reaction glucuronate acceptor + UDP-alpha-D-glucuronate = acceptor beta-D-glucuronoside + UDP + H(+). In terms of biological role, UDPGT is of major importance in the conjugation and subsequent elimination of potentially toxic xenobiotics and endogenous compounds. The chain is UDP-glucuronosyltransferase 2B10 (UGT2B10) from Homo sapiens (Human).